Reading from the N-terminus, the 248-residue chain is Ras-like protein family member 11B (248 aa).

The tract at residues 29 to 246 (AGRRLVKIAV…ALSAKVRTVT (218 aa)) is small GTPase-like. GTP-binding positions include 40–47 (GASGVGKT), 87–94 (DTPGIQVH), and 152–155 (NKAD). The disordered stretch occupies residues 205–226 (QQPSSTPEKRRTSLIPRPKSPN).

The protein belongs to the small GTPase superfamily. Ras family. Widely expressed with highest levels in placenta and primary macrophages.

It carries out the reaction GTP + H2O = GDP + phosphate + H(+). The sequence is that of Ras-like protein family member 11B from Homo sapiens (Human).